Here is a 424-residue protein sequence, read N- to C-terminus: Imidazolonepropionase (424 aa).

The Fe(3+) site is built by His81 and His83. Zn(2+) is bound by residues His81 and His83. Arg90, Tyr153, and His186 together coordinate 4-imidazolone-5-propanoate. N-formimidoyl-L-glutamate is bound at residue Tyr153. His251 serves as a coordination point for Fe(3+). Residue His251 coordinates Zn(2+). Glu254 serves as a coordination point for 4-imidazolone-5-propanoate. Fe(3+) is bound at residue Asp325. Zn(2+) is bound at residue Asp325. N-formimidoyl-L-glutamate contacts are provided by Asn327 and Gly329. Thr330 is a binding site for 4-imidazolone-5-propanoate.

Belongs to the metallo-dependent hydrolases superfamily. HutI family. It depends on Zn(2+) as a cofactor. Requires Fe(3+) as cofactor.

The protein resides in the cytoplasm. It carries out the reaction 4-imidazolone-5-propanoate + H2O = N-formimidoyl-L-glutamate. It participates in amino-acid degradation; L-histidine degradation into L-glutamate; N-formimidoyl-L-glutamate from L-histidine: step 3/3. Functionally, catalyzes the hydrolytic cleavage of the carbon-nitrogen bond in imidazolone-5-propanoate to yield N-formimidoyl-L-glutamate. It is the third step in the universal histidine degradation pathway. The protein is Imidazolonepropionase of Syntrophobacter fumaroxidans (strain DSM 10017 / MPOB).